Consider the following 276-residue polypeptide: MKTSKTKTPKSVLIAGPCVIESLENLRSIAIKLQPLANNERLDFYFKASFDKANRTSLESYRGPGLGKGLEMLQTIKDEFGYKILTDVHESYQASAAAKVADILQIPAFLCRQTDLIVEVSQTNAIINIKKGQFMNPKDMQYSVLKALKTRDSSIQSPTYETALKNGVWLCERGSSFGYGNLVVDMRSLKIMREFAPVIFDATHSVQMPGGANGKSSGDSSFAPILARAAAAVGIDGLFAETHVDPKNALSDGANMLKPDELEHLVADMLKIQNLF.

It belongs to the KdsA family.

The protein localises to the cytoplasm. The enzyme catalyses D-arabinose 5-phosphate + phosphoenolpyruvate + H2O = 3-deoxy-alpha-D-manno-2-octulosonate-8-phosphate + phosphate. The protein operates within carbohydrate biosynthesis; 3-deoxy-D-manno-octulosonate biosynthesis; 3-deoxy-D-manno-octulosonate from D-ribulose 5-phosphate: step 2/3. It participates in bacterial outer membrane biogenesis; lipopolysaccharide biosynthesis. The polypeptide is 2-dehydro-3-deoxyphosphooctonate aldolase (Helicobacter pylori (strain Shi470)).